A 360-amino-acid chain; its full sequence is Phenylalanine--tRNA ligase alpha subunit (360 aa).

Glu-260 provides a ligand contact to Mg(2+).

Belongs to the class-II aminoacyl-tRNA synthetase family. Phe-tRNA synthetase alpha subunit type 1 subfamily. As to quaternary structure, tetramer of two alpha and two beta subunits. Mg(2+) serves as cofactor.

It localises to the cytoplasm. The catalysed reaction is tRNA(Phe) + L-phenylalanine + ATP = L-phenylalanyl-tRNA(Phe) + AMP + diphosphate + H(+). This is Phenylalanine--tRNA ligase alpha subunit from Sinorhizobium fredii (strain NBRC 101917 / NGR234).